A 411-amino-acid polypeptide reads, in one-letter code: Probable tRNA pseudouridine synthase D (411 aa).

The active-site Nucleophile is Asp81. The TRUD domain occupies Gly154–Leu375.

This sequence belongs to the pseudouridine synthase TruD family.

It catalyses the reaction uridine(13) in tRNA = pseudouridine(13) in tRNA. Functionally, could be responsible for synthesis of pseudouridine from uracil-13 in transfer RNAs. This Archaeoglobus fulgidus (strain ATCC 49558 / DSM 4304 / JCM 9628 / NBRC 100126 / VC-16) protein is Probable tRNA pseudouridine synthase D.